Reading from the N-terminus, the 103-residue chain is uncharacterized protein (103 aa).

This is an uncharacterized protein from Acanthamoeba polyphaga (Amoeba).